Here is a 187-residue protein sequence, read N- to C-terminus: Elongation factor P (187 aa).

Belongs to the elongation factor P family.

The protein localises to the cytoplasm. It functions in the pathway protein biosynthesis; polypeptide chain elongation. Its function is as follows. Involved in peptide bond synthesis. Stimulates efficient translation and peptide-bond synthesis on native or reconstituted 70S ribosomes in vitro. Probably functions indirectly by altering the affinity of the ribosome for aminoacyl-tRNA, thus increasing their reactivity as acceptors for peptidyl transferase. The chain is Elongation factor P from Treponema denticola (strain ATCC 35405 / DSM 14222 / CIP 103919 / JCM 8153 / KCTC 15104).